The sequence spans 163 residues: Putative H/ACA ribonucleoprotein complex subunit 2-like protein (163 aa).

Belongs to the eukaryotic ribosomal protein eL8 family. As to quaternary structure, component of the small nucleolar ribonucleoprotein particle containing H/ACA-type snoRNAs (H/ACA snoRNPs).

The protein localises to the nucleus. Its subcellular location is the nucleolus. Its function is as follows. Required for ribosome biogenesis. Part of a complex which catalyzes pseudouridylation of rRNA. This involves the isomerization of uridine such that the ribose is subsequently attached to C5, instead of the normal N1. Pseudouridine ('psi') residues may serve to stabilize the conformation of rRNAs. The protein is Putative H/ACA ribonucleoprotein complex subunit 2-like protein of Caenorhabditis briggsae.